The following is a 365-amino-acid chain: Chaperone protein DnaJ (365 aa).

Residues 4–70 enclose the J domain; that stretch reads DYYKILGVDR…QKRRMYDQTG (67 aa). The segment at 139-220 adopts a CR-type zinc-finger fold; that stretch reads GTEKRIKYRR…CNGTGTVVVN (82 aa). The Zn(2+) site is built by Cys152, Cys155, Cys168, Cys171, Cys194, Cys197, Cys208, and Cys211. CXXCXGXG motif repeat units follow at residues 152–159, 168–175, 194–201, and 208–215; these read CPDCNGTG, CPTCNGTG, CQTCGGRG, and CPRCNGTG.

It belongs to the DnaJ family. Homodimer. Requires Zn(2+) as cofactor.

The protein resides in the cytoplasm. In terms of biological role, participates actively in the response to hyperosmotic and heat shock by preventing the aggregation of stress-denatured proteins and by disaggregating proteins, also in an autonomous, DnaK-independent fashion. Unfolded proteins bind initially to DnaJ; upon interaction with the DnaJ-bound protein, DnaK hydrolyzes its bound ATP, resulting in the formation of a stable complex. GrpE releases ADP from DnaK; ATP binding to DnaK triggers the release of the substrate protein, thus completing the reaction cycle. Several rounds of ATP-dependent interactions between DnaJ, DnaK and GrpE are required for fully efficient folding. Also involved, together with DnaK and GrpE, in the DNA replication of plasmids through activation of initiation proteins. The sequence is that of Chaperone protein DnaJ from Thermoplasma acidophilum (strain ATCC 25905 / DSM 1728 / JCM 9062 / NBRC 15155 / AMRC-C165).